Consider the following 198-residue polypeptide: Nucleoid occlusion factor SlmA (198 aa).

The 62-residue stretch at 9–70 (RNRREEILQA…SLIEFIEDSL (62 aa)) folds into the HTH tetR-type domain. A DNA-binding region (H-T-H motif) is located at residues 33-52 (TTAKLAANVGVSEAALYRHF). Residues 113–144 (ALMFEQDRLQDRINQLFERIESQLRQVLREHK) are a coiled coil.

This sequence belongs to the nucleoid occlusion factor SlmA family. In terms of assembly, homodimer. Interacts with FtsZ.

The protein localises to the cytoplasm. It is found in the nucleoid. In terms of biological role, required for nucleoid occlusion (NO) phenomenon, which prevents Z-ring formation and cell division over the nucleoid. Acts as a DNA-associated cell division inhibitor that binds simultaneously chromosomal DNA and FtsZ, and disrupts the assembly of FtsZ polymers. SlmA-DNA-binding sequences (SBS) are dispersed on non-Ter regions of the chromosome, preventing FtsZ polymerization at these regions. In Pectobacterium carotovorum subsp. carotovorum (strain PC1), this protein is Nucleoid occlusion factor SlmA.